A 1698-amino-acid polypeptide reads, in one-letter code: Cullin-7 (1698 aa).

The segment at 315–357 (QASDRPRSSARSPGSIFQPQLADVSPGLPAAQAQPSFRRSRRF) is disordered. Ser339 carries the phosphoserine modification. The region spanning 360–433 (RSEFASGNTY…HWHMLEILGF (74 aa)) is the CPH domain. Positions 601 to 611 (SEDAAKVEAKE) are enriched in basic and acidic residues. A disordered region spans residues 601–623 (SEDAAKVEAKEPPSQSPNTPLQR). The DOC domain maps to 814–993 (PINIPFFDVF…HTRLFYMVRA (180 aa)). Residues 1345-1370 (GASGKEHKSEKEEEAGAAAVVDVAEG) form a disordered region. Residue Lys1576 forms a Glycyl lysine isopeptide (Lys-Gly) (interchain with G-Cter in NEDD8) linkage.

The protein belongs to the cullin family. In terms of assembly, component of the 3M complex, composed of core components CUL7, CCDC8 and OBSL1. Component of the Cul7-RING(FBXW8) complex consisting of CUL7, RBX1, SKP1 and FBXW8. Within the Cul7-RING(FBXW8) complex interacts with FBXW8 and RBX1, but not with SKP1. Interacts with CUL1 (via the C-terminal domain); the interaction seems to be mediated by FBXW8; it is likely specific to FBXW8, but not other F-box proteins. Interacts (via the CPH domain) with p53/TP53; the interaction preferentially involves tetrameric and dimeric p53/TP53; this interaction recruits p53/TP53 for ubiquitination by neddylated CUL1-RBX1. The CUL7-CUL9 heterodimer seems to interact specifically with p53/TP53. Interacts with FBXW8; interaction is mutually exclusive of binding to CUL9 or p53/TP53. Interacts with CUL9; leading to inhibited CUL9 activity. Interacts with OBSL1. Interacts (as part of the 3M complex) with HDAC4 and HDAC5; it is negatively regulated by ANKRA2. (Microbial infection) Interacts with SV40 Large T antigen; this interaction seems to inhibit CUL7. In terms of processing, according to a report, may not be neddylated despite the conserved consensus site for neddylation at Lys-1576. Structural study of the Cul7-RING(FBXW8) reveals that both CUL7 and RBX1 are in orientations that are incompatible with neddylation. As to expression, highly expressed in fetal kidney and adult skeletal muscle. Also abundant in fetal brain, as well as in adult pancreas, kidney, placenta and heart. Detected in trophoblasts, lymphoblasts, osteoblasts, chondrocytes and skin fibroblasts.

It is found in the cytoplasm. The protein resides in the cytoskeleton. Its subcellular location is the microtubule organizing center. It localises to the centrosome. The protein localises to the perinuclear region. It is found in the golgi apparatus. It participates in protein modification; protein ubiquitination. Its function is as follows. Core component of the 3M and Cul7-RING(FBXW8) complexes, which mediate the ubiquitination and subsequent proteasomal degradation of target proteins. Core component of the 3M complex, a complex required to regulate microtubule dynamics and genome integrity. It is unclear how the 3M complex regulates microtubules, it could act by controlling the level of a microtubule stabilizer. The Cul7-RING(FBXW8) complex alone lacks ubiquitination activity and does not promote polyubiquitination and proteasomal degradation of p53/TP53. However it mediates recruitment of p53/TP53 for ubiquitination by neddylated CUL1-RBX1. Interaction with CUL9 is required to inhibit CUL9 activity and ubiquitination of BIRC5. The Cul7-RING(FBXW8) complex also mediates ubiquitination and consequent degradation of target proteins such as GORASP1, IRS1 and MAP4K1/HPK1. Ubiquitination of GORASP1 regulates Golgi morphogenesis and dendrite patterning in brain. Mediates ubiquitination and degradation of IRS1 in a mTOR-dependent manner: the Cul7-RING(FBXW8) complex recognizes and binds IRS1 previously phosphorylated by S6 kinase (RPS6KB1 or RPS6KB2). The Cul7-RING(FBXW8) complex also mediates ubiquitination of MAP4K1/HPK1: recognizes and binds autophosphorylated MAP4K1/HPK1, leading to its degradation, thereby affecting cell proliferation and differentiation. Acts as a regulator in trophoblast cell epithelial-mesenchymal transition and placental development. While the Cul7-RING(FBXW8) and the 3M complexes are associated and involved in common processes, CUL7 and the Cul7-RING(FBXW8) complex may have additional functions. Probably plays a role in the degradation of proteins involved in endothelial proliferation and/or differentiation. The chain is Cullin-7 (CUL7) from Homo sapiens (Human).